Consider the following 220-residue polypeptide: Guanylate kinase (220 aa).

In terms of domain architecture, Guanylate kinase-like spans 14–194 (GLMVVISSPS…SYAAIKSIIN (181 aa)). 21-28 (SPSGAGKS) contributes to the ATP binding site.

It belongs to the guanylate kinase family.

It localises to the cytoplasm. The enzyme catalyses GMP + ATP = GDP + ADP. Its function is as follows. Essential for recycling GMP and indirectly, cGMP. In Brucella abortus (strain 2308), this protein is Guanylate kinase.